A 249-amino-acid chain; its full sequence is Voltage-gated potassium channel subunit beta-3 (249 aa).

16 residues coordinate NADP(+): Asn-44, Ser-74, Arg-75, Gln-100, Trp-129, Ser-130, Pro-131, Leu-132, Ala-133, Cys-134, Lys-140, Lys-150, Gly-209, Ser-211, Gln-215, and Glu-218.

It belongs to the shaker potassium channel beta subunit family. In terms of assembly, forms heteromultimeric complex with alpha subunits. Interacts with KCNA5 and KCNB2. As to expression, strong expression in brain, with highest levels in neocortical and allocortical regions, hippocampus, olfactory bulb and cerebellum. Also strong in kidney. Weak expression in lung, skeletal muscle and heart.

Its subcellular location is the cytoplasm. Functionally, regulatory subunit of the voltage-gated potassium (Kv) channels composed of pore-forming and potassium-conducting alpha subunits and of regulatory beta subunit. The beta-3/KCNAB3 subunit may mediate closure of potassium channels. Enhances the expression of Kv2.2/KCNB2 alpha subunit-containing Kv channels but not Kv2.1/KCNB1. May display nicotinamide adenine dinucleotide phosphate (NADPH)-dependent aldoketoreductase activity. The binding of oxidized and reduced NADP(H) cofactors may be required for the regulation of potassium channel activity. This is Voltage-gated potassium channel subunit beta-3 from Mus musculus (Mouse).